A 139-amino-acid polypeptide reads, in one-letter code: D-ribose pyranase (139 aa).

Histidine 20 functions as the Proton donor in the catalytic mechanism. Substrate contacts are provided by residues aspartate 28, histidine 106, and tyrosine 128–asparagine 130.

It belongs to the RbsD / FucU family. RbsD subfamily. As to quaternary structure, homodecamer.

It is found in the cytoplasm. It carries out the reaction beta-D-ribopyranose = beta-D-ribofuranose. It participates in carbohydrate metabolism; D-ribose degradation; D-ribose 5-phosphate from beta-D-ribopyranose: step 1/2. In terms of biological role, catalyzes the interconversion of beta-pyran and beta-furan forms of D-ribose. This Vibrio cholerae serotype O1 (strain ATCC 39541 / Classical Ogawa 395 / O395) protein is D-ribose pyranase.